Here is a 136-residue protein sequence, read N- to C-terminus: Peptide methionine sulfoxide reductase MsrB (136 aa).

The region spanning 9 to 136 (DAEWKALLAE…NSASLDFKKK (128 aa)) is the MsrB domain. Zn(2+) contacts are provided by C53, C56, C102, and C105. Catalysis depends on C125, which acts as the Nucleophile.

This sequence belongs to the MsrB Met sulfoxide reductase family. Zn(2+) serves as cofactor.

It carries out the reaction L-methionyl-[protein] + [thioredoxin]-disulfide + H2O = L-methionyl-(R)-S-oxide-[protein] + [thioredoxin]-dithiol. This chain is Peptide methionine sulfoxide reductase MsrB, found in Variovorax paradoxus (strain S110).